The chain runs to 442 residues: UDP-N-acetylmuramate--L-alanine ligase (442 aa).

Glycine 109–serine 115 lines the ATP pocket.

Belongs to the MurCDEF family.

Its subcellular location is the cytoplasm. The enzyme catalyses UDP-N-acetyl-alpha-D-muramate + L-alanine + ATP = UDP-N-acetyl-alpha-D-muramoyl-L-alanine + ADP + phosphate + H(+). It functions in the pathway cell wall biogenesis; peptidoglycan biosynthesis. Cell wall formation. The protein is UDP-N-acetylmuramate--L-alanine ligase of Streptococcus pyogenes serotype M49 (strain NZ131).